The sequence spans 85 residues: Small ribosomal subunit protein bS18 (85 aa).

Belongs to the bacterial ribosomal protein bS18 family. Part of the 30S ribosomal subunit. Forms a tight heterodimer with protein bS6.

Its function is as follows. Binds as a heterodimer with protein bS6 to the central domain of the 16S rRNA, where it helps stabilize the platform of the 30S subunit. The sequence is that of Small ribosomal subunit protein bS18 from Helicobacter acinonychis (strain Sheeba).